The chain runs to 750 residues: Phosphoribosylformylglycinamidine synthase subunit PurL (750 aa).

The active site involves His54. ATP contacts are provided by Tyr57 and Lys101. Glu103 is a binding site for Mg(2+). Residues 104-107 (SHNH) and Arg126 contribute to the substrate site. His105 acts as the Proton acceptor in catalysis. Asp127 contributes to the Mg(2+) binding site. Gln251 serves as a coordination point for substrate. Residue Asp279 coordinates Mg(2+). A substrate-binding site is contributed by 323–325 (ESQ). ATP is bound by residues Asp509 and Gly546. Asn547 serves as a coordination point for Mg(2+). Ser549 contributes to the substrate binding site.

This sequence belongs to the FGAMS family. As to quaternary structure, monomer. Part of the FGAM synthase complex composed of 1 PurL, 1 PurQ and 2 PurS subunits.

It localises to the cytoplasm. It carries out the reaction N(2)-formyl-N(1)-(5-phospho-beta-D-ribosyl)glycinamide + L-glutamine + ATP + H2O = 2-formamido-N(1)-(5-O-phospho-beta-D-ribosyl)acetamidine + L-glutamate + ADP + phosphate + H(+). It participates in purine metabolism; IMP biosynthesis via de novo pathway; 5-amino-1-(5-phospho-D-ribosyl)imidazole from N(2)-formyl-N(1)-(5-phospho-D-ribosyl)glycinamide: step 1/2. In terms of biological role, part of the phosphoribosylformylglycinamidine synthase complex involved in the purines biosynthetic pathway. Catalyzes the ATP-dependent conversion of formylglycinamide ribonucleotide (FGAR) and glutamine to yield formylglycinamidine ribonucleotide (FGAM) and glutamate. The FGAM synthase complex is composed of three subunits. PurQ produces an ammonia molecule by converting glutamine to glutamate. PurL transfers the ammonia molecule to FGAR to form FGAM in an ATP-dependent manner. PurS interacts with PurQ and PurL and is thought to assist in the transfer of the ammonia molecule from PurQ to PurL. The sequence is that of Phosphoribosylformylglycinamidine synthase subunit PurL from Cutibacterium acnes (strain DSM 16379 / KPA171202) (Propionibacterium acnes).